A 453-amino-acid chain; its full sequence is Elongation factor 1-alpha (453 aa).

Residues 5–230 enclose the tr-type G domain; that stretch reads KTHINIVVIG…DAIVEPKRPH (226 aa). A G1 region spans residues 14–21; that stretch reads GHVDAGKS. A GTP-binding site is contributed by 14-21; sequence GHVDAGKS. The tract at residues 70-74 is G2; the sequence is GITID. Residues 91 to 94 form a G3 region; the sequence is DAPG. GTP is bound by residues 91–95 and 153–156; these read DAPGH and NKMD. The segment at 153 to 156 is G4; it reads NKMD. Positions 194-196 are G5; it reads SGW.

It belongs to the TRAFAC class translation factor GTPase superfamily. Classic translation factor GTPase family. EF-Tu/EF-1A subfamily. Binds to actin.

The protein localises to the cytoplasm. Its function is as follows. This protein promotes the GTP-dependent binding of aminoacyl-tRNA to the A-site of ribosomes during protein biosynthesis. It is also an abundant actin filament bundling protein. This is Elongation factor 1-alpha (eef1a2) from Dictyostelium discoideum (Social amoeba).